The following is a 503-amino-acid chain: Glycerol kinase (503 aa).

T14 is a binding site for ADP. ATP is bound by residues T14, T15, and S16. T14 is a binding site for sn-glycerol 3-phosphate. ADP is bound at residue R18. Residues R84, E85, Y136, and D246 each coordinate sn-glycerol 3-phosphate. Residues R84, E85, Y136, D246, and Q247 each contribute to the glycerol site. Positions 268 and 311 each coordinate ADP. Positions 268, 311, 315, and 412 each coordinate ATP. ADP is bound by residues G412 and N416.

It belongs to the FGGY kinase family.

It catalyses the reaction glycerol + ATP = sn-glycerol 3-phosphate + ADP + H(+). It functions in the pathway polyol metabolism; glycerol degradation via glycerol kinase pathway; sn-glycerol 3-phosphate from glycerol: step 1/1. With respect to regulation, inhibited by fructose 1,6-bisphosphate (FBP). In terms of biological role, key enzyme in the regulation of glycerol uptake and metabolism. Catalyzes the phosphorylation of glycerol to yield sn-glycerol 3-phosphate. In Haemophilus influenzae (strain PittGG), this protein is Glycerol kinase.